The primary structure comprises 213 residues: Thymidylate kinase (213 aa).

An ATP-binding site is contributed by 10–17 (GLEGAGKT).

Belongs to the thymidylate kinase family.

It carries out the reaction dTMP + ATP = dTDP + ADP. Phosphorylation of dTMP to form dTDP in both de novo and salvage pathways of dTTP synthesis. In Escherichia coli O6:K15:H31 (strain 536 / UPEC), this protein is Thymidylate kinase.